The sequence spans 395 residues: MRVVAAMSGGVDSAVAASRALEAGHEVIGVHLALSQSPEAVRAGSRGCCSLEDSADARRVADKLGIPFYVWDFSDRFKADVIDDFVDSYAIGETPNPCLRCNEKIKFEALLDRSIALGFDAVVTGHYARLHDGVMRRGVDANKDQSYVLGVLTDEQLAHCMFPVGDTIKPEIREEAKDHGFGVASKPDSHDICFIPDGQTQAFLGKKIGLRPGLMKDQDGSTVAEHDGVYGFTIGQRKGLGLPREGLDGKPRYVTDIDAATGTVTIGQRDDLRVGGITADRLKRLDPAVHGREFECEVQVRAHGGVVPATARLVDDPERTTPAGRVKKEDESPWRLELDLHEPLQGVARGQAAVVYQPDADGDILLGSGTIRATAPWSDAGAAGTAGERATPAEA.

Residues 6–13 (AMSGGVDS) and leucine 32 contribute to the ATP site. Cysteine 101 functions as the Nucleophile in the catalytic mechanism. A disulfide bridge links cysteine 101 with cysteine 193. Glycine 125 contacts ATP. The interval 143–145 (KDQ) is interaction with tRNA. Cysteine 193 acts as the Cysteine persulfide intermediate in catalysis.

The protein belongs to the MnmA/TRMU family.

Its subcellular location is the cytoplasm. It catalyses the reaction S-sulfanyl-L-cysteinyl-[protein] + uridine(34) in tRNA + AH2 + ATP = 2-thiouridine(34) in tRNA + L-cysteinyl-[protein] + A + AMP + diphosphate + H(+). Functionally, catalyzes the 2-thiolation of uridine at the wobble position (U34) of tRNA, leading to the formation of s(2)U34. The chain is tRNA-specific 2-thiouridylase MnmA from Corynebacterium jeikeium (strain K411).